A 338-amino-acid polypeptide reads, in one-letter code: DNA-directed RNA polymerase subunit alpha (338 aa).

An alpha N-terminal domain (alpha-NTD) region spans residues 1–226 (MLIAQRPTLT…ELFGLARELN (226 aa)). The segment at 243–338 (LAADLALPIE…DADYADEQYN (96 aa)) is alpha C-terminal domain (alpha-CTD).

The protein belongs to the RNA polymerase alpha chain family. As to quaternary structure, homodimer. The RNAP catalytic core consists of 2 alpha, 1 beta, 1 beta' and 1 omega subunit. When a sigma factor is associated with the core the holoenzyme is formed, which can initiate transcription.

It catalyses the reaction RNA(n) + a ribonucleoside 5'-triphosphate = RNA(n+1) + diphosphate. In terms of biological role, DNA-dependent RNA polymerase catalyzes the transcription of DNA into RNA using the four ribonucleoside triphosphates as substrates. The protein is DNA-directed RNA polymerase subunit alpha of Beutenbergia cavernae (strain ATCC BAA-8 / DSM 12333 / CCUG 43141 / JCM 11478 / NBRC 16432 / NCIMB 13614 / HKI 0122).